Here is a 226-residue protein sequence, read N- to C-terminus: MKAIRIAIDGPASSGKSTVAKIIAKNLGYTYLDTGAMYRCATYIALKNNYSENDISAILKELSEHPITFKKADDGSQLVFLGTEDVTLAIRQNDVTNNVSWVSAIAEIREELVAQQRRIAQDGAIIMDGRDIGTVVLPDAELKIFLIASVDERAERRYRENLEKGIDSDFETLKEEIAARDFKDSHREVSPLKAADDAIVFDTTGVTIQGVVQFIQEKAEKIIDMS.

ATP is bound at residue 10–18; the sequence is GPASSGKST.

The protein belongs to the cytidylate kinase family. Type 1 subfamily.

Its subcellular location is the cytoplasm. It catalyses the reaction CMP + ATP = CDP + ADP. It carries out the reaction dCMP + ATP = dCDP + ADP. The polypeptide is Cytidylate kinase (Streptococcus uberis (strain ATCC BAA-854 / 0140J)).